A 678-amino-acid chain; its full sequence is AAC-rich mRNA clone AAC4 protein (678 aa).

Residues 55–73 (NNNNNNNNNNNNNNNNNNN) are compositionally biased toward low complexity. Residues 55 to 75 (NNNNNNNNNNNNNNNNNNNTS) are disordered. The chain crosses the membrane as a helical span at residues 243–263 (IIPIYHEIILVLCNWLVVAFY). Residues 318 to 346 (NNNNNNNNNNNNNNNNNNNNNNNNKTNNN) are compositionally biased toward low complexity. The segment at 318 to 347 (NNNNNNNNNNNNNNNNNNNNNNNNKTNNNQ) is disordered.

It is found in the membrane. This is AAC-rich mRNA clone AAC4 protein (AAC4) from Dictyostelium discoideum (Social amoeba).